The following is a 301-amino-acid chain: uncharacterized protein (301 aa).

This is an uncharacterized protein from Escherichia coli (strain K12).